The primary structure comprises 294 residues: Transmembrane protein 178B (294 aa).

Residues M1–A23 form the signal peptide. A run of 3 helical transmembrane segments spans residues A172–G192, L206–I226, and M252–A272.

Belongs to the TMEM178 family.

Its subcellular location is the membrane. In Danio rerio (Zebrafish), this protein is Transmembrane protein 178B (tmem178b).